Reading from the N-terminus, the 699-residue chain is Methylcrotonoyl-CoA carboxylase subunit alpha, mitochondrial (699 aa).

The Biotin carboxylation domain occupies 30-475 (ITKILIANRG…ETGFIPIHRE (446 aa)). ATP contacts are provided by Lys144, Glu228, and His263. The 198-residue stretch at 148-345 (KDIMIKAGVP…LVEWQLKVAE (198 aa)) folds into the ATP-grasp domain. Residue Arg320 is part of the active site. The Biotinyl-binding domain maps to 624 to 699 (KGADGVLGSL…EDKKTLAVIV (76 aa)). Lys665 carries the N6-biotinyllysine modification.

As to quaternary structure, probably a dodecamer composed of six biotin-containing alpha subunits and six beta subunits. Mn(2+) is required as a cofactor. Requires biotin as cofactor.

The protein localises to the mitochondrion matrix. The catalysed reaction is 3-methylbut-2-enoyl-CoA + hydrogencarbonate + ATP = 3-methyl-(2E)-glutaconyl-CoA + ADP + phosphate + H(+). It functions in the pathway amino-acid degradation; L-leucine degradation; (S)-3-hydroxy-3-methylglutaryl-CoA from 3-isovaleryl-CoA: step 2/3. Biotin-attachment subunit of the 3-methylcrotonyl-CoA carboxylase, an enzyme that catalyzes the conversion of 3-methylcrotonyl-CoA to 3-methylglutaconyl-CoA, a critical step for leucine and isovaleric acid catabolism. The polypeptide is Methylcrotonoyl-CoA carboxylase subunit alpha, mitochondrial (mccA) (Dictyostelium discoideum (Social amoeba)).